The chain runs to 320 residues: Aspartate carbamoyltransferase catalytic subunit (320 aa).

Carbamoyl phosphate is bound by residues Arg-70 and Thr-71. Lys-98 lines the L-aspartate pocket. The carbamoyl phosphate site is built by Arg-120, His-150, and Gln-153. The L-aspartate site is built by Arg-184 and Arg-239. Carbamoyl phosphate is bound by residues Gly-280 and Pro-281.

It belongs to the aspartate/ornithine carbamoyltransferase superfamily. ATCase family. Heterododecamer (2C3:3R2) of six catalytic PyrB chains organized as two trimers (C3), and six regulatory PyrI chains organized as three dimers (R2).

The enzyme catalyses carbamoyl phosphate + L-aspartate = N-carbamoyl-L-aspartate + phosphate + H(+). The protein operates within pyrimidine metabolism; UMP biosynthesis via de novo pathway; (S)-dihydroorotate from bicarbonate: step 2/3. Functionally, catalyzes the condensation of carbamoyl phosphate and aspartate to form carbamoyl aspartate and inorganic phosphate, the committed step in the de novo pyrimidine nucleotide biosynthesis pathway. The sequence is that of Aspartate carbamoyltransferase catalytic subunit from Xylella fastidiosa (strain Temecula1 / ATCC 700964).